A 256-amino-acid chain; its full sequence is Non-homologous end joining protein Ku 2 (256 aa).

A Ku domain is found at 13 to 184 (FADTDVAVKL…SLELQESPVS (172 aa)).

Belongs to the prokaryotic Ku family. As to quaternary structure, homodimer. Interacts with LigD.

With LigD forms a non-homologous end joining (NHEJ) DNA repair enzyme, which repairs dsDNA breaks with reduced fidelity. Binds linear dsDNA with 5'- and 3'- overhangs but not closed circular dsDNA nor ssDNA. Recruits and stimulates the ligase activity of LigD. This is Non-homologous end joining protein Ku 2 from Geotalea uraniireducens (strain Rf4) (Geobacter uraniireducens).